We begin with the raw amino-acid sequence, 330 residues long: Phytanoyl-CoA hydroxylase-interacting protein (330 aa).

The 110-residue stretch at 6 to 115 (TPHSIEINNI…ETVEFCTGDY (110 aa)) folds into the Fibronectin type-III domain. Asparagine 14 and asparagine 325 each carry an N-linked (GlcNAc...) asparagine glycan.

It belongs to the PHYHIP family. In terms of assembly, interacts with PHYH and ADGRB1. In terms of tissue distribution, highly expressed in the brain.

Its interaction with PHYH suggests a role in the development of the central system. The polypeptide is Phytanoyl-CoA hydroxylase-interacting protein (Phyhip) (Mus musculus (Mouse)).